A 159-amino-acid chain; its full sequence is Na(+)/H(+) antiporter subunit E1 (159 aa).

4 helical membrane passes run 1–21 (MAVQLVLNFIIAVFWLFVTNS), 27–47 (FVLGFIFGLVLVYLLHRVLPG), 49–69 (FYVITLYRIIKLVIIFLIELI), and 101–121 (WQIVLLSNLITLTPGTVVLGV).

This sequence belongs to the CPA3 antiporters (TC 2.A.63) subunit E family. As to quaternary structure, may form a heterooligomeric complex that consists of seven subunits: mnhA1, mnhB1, mnhC1, mnhD1, mnhE1, mnhF1 and mnhG1.

It localises to the cell membrane. In terms of biological role, mnh complex is a Na(+)/H(+) antiporter involved in Na(+) excretion. This chain is Na(+)/H(+) antiporter subunit E1 (mnhE1), found in Staphylococcus aureus (strain Mu3 / ATCC 700698).